Here is a 204-residue protein sequence, read N- to C-terminus: Spermatogenesis-associated protein 46 (204 aa).

The segment at 101-120 is disordered; sequence SSSSQENTYPREANRKSKHG.

Testis-specific.

The protein resides in the nucleus membrane. Plays a role in spermiogenesis and fertilization. The chain is Spermatogenesis-associated protein 46 (Spata46) from Mus musculus (Mouse).